The chain runs to 494 residues: Glycogen synthase (494 aa).

K15 serves as a coordination point for ADP-alpha-D-glucose.

It belongs to the glycosyltransferase 1 family. Bacterial/plant glycogen synthase subfamily.

The enzyme catalyses [(1-&gt;4)-alpha-D-glucosyl](n) + ADP-alpha-D-glucose = [(1-&gt;4)-alpha-D-glucosyl](n+1) + ADP + H(+). It functions in the pathway glycan biosynthesis; glycogen biosynthesis. Functionally, synthesizes alpha-1,4-glucan chains using ADP-glucose. The chain is Glycogen synthase from Albidiferax ferrireducens (strain ATCC BAA-621 / DSM 15236 / T118) (Rhodoferax ferrireducens).